A 79-amino-acid polypeptide reads, in one-letter code: UPF0337 protein YhjA (79 aa).

The tract at residues 1-30 is disordered; it reads MALNDKLDATKDKVSGKVKETTGKVTGDEK.

It belongs to the UPF0337 (CsbD) family.

In Lactococcus lactis subsp. lactis (strain IL1403) (Streptococcus lactis), this protein is UPF0337 protein YhjA (yhjA).